A 722-amino-acid polypeptide reads, in one-letter code: Polyribonucleotide nucleotidyltransferase (722 aa).

Positions 498 and 504 each coordinate Mg(2+). The 60-residue stretch at 565 to 624 folds into the KH domain; that stretch reads PQFHTMKIDPDKIRDIIGKGGATIRSITEETGASIDIDDNGTIKIYADDGDGMQAAIARI. One can recognise an S1 motif domain in the interval 634–702; the sequence is GAVYQGKVVR…QRGRIKLSIK (69 aa).

Belongs to the polyribonucleotide nucleotidyltransferase family. As to quaternary structure, component of the RNA degradosome, which is a multiprotein complex involved in RNA processing and mRNA degradation. Mg(2+) serves as cofactor.

Its subcellular location is the cytoplasm. The catalysed reaction is RNA(n+1) + phosphate = RNA(n) + a ribonucleoside 5'-diphosphate. Its function is as follows. Involved in mRNA degradation. Catalyzes the phosphorolysis of single-stranded polyribonucleotides processively in the 3'- to 5'-direction. The polypeptide is Polyribonucleotide nucleotidyltransferase (Saccharophagus degradans (strain 2-40 / ATCC 43961 / DSM 17024)).